The sequence spans 166 residues: Signal peptidase complex catalytic subunit SEC11 (166 aa).

Residues 1–9 (MNIRQQLTQ) are Cytoplasmic-facing. Residues 10–30 (FLSLAYVFTSAFVIWKSLGII) traverse the membrane as a helical; Signal-anchor for type II membrane protein segment. Topologically, residues 31 to 166 (TNSHSPIVVV…MCISTLLTNE (136 aa)) are lumenal. Residues Ser44, His83, and Asp108 each act as charge relay system in the active site. The C-terminal short (CTS) helix stretch occupies residues 152-163 (GMLGLMCISTLL).

Belongs to the peptidase S26B family. As to quaternary structure, component of the signal peptidase complex (SPC) composed of a catalytic subunit SEC11 and three accessory subunits SPC1, SPC2 and SPC3. The complex induces a local thinning of the ER membrane which is used to measure the length of the signal peptide (SP) h-region of protein substrates. This ensures the selectivity of the complex towards h-regions shorter than 18-20 amino acids. SPC associates with the translocon complex.

It localises to the endoplasmic reticulum membrane. It carries out the reaction Cleavage of hydrophobic, N-terminal signal or leader sequences from secreted and periplasmic proteins.. Functionally, catalytic component of the signal peptidase complex (SPC) which catalyzes the cleavage of N-terminal signal sequences from nascent proteins as they are translocated into the lumen of the endoplasmic reticulum. Specifically cleaves N-terminal signal peptides that contain a hydrophobic alpha-helix (h-region) shorter than 18-20 amino acids. The sequence is that of Signal peptidase complex catalytic subunit SEC11 (SEC11) from Scheffersomyces stipitis (strain ATCC 58785 / CBS 6054 / NBRC 10063 / NRRL Y-11545) (Yeast).